The chain runs to 357 residues: Holliday junction branch migration complex subunit RuvB (357 aa).

Residues 4 to 195 (TDKLAAKAVS…FGIVARLEFY (192 aa)) form a large ATPase domain (RuvB-L) region. Residues L34, R35, G76, K79, T80, T81, 142–144 (EDY), R185, Y195, and R232 each bind ATP. T80 is a Mg(2+) binding site. Positions 196–266 (TPAELAKIVT…VADAALAMLD (71 aa)) are small ATPAse domain (RuvB-S). The head domain (RuvB-H) stretch occupies residues 269–357 (AVGFDLMDRK…PVRDLWDDNQ (89 aa)). DNA-binding residues include R305, R324, and R329.

The protein belongs to the RuvB family. Homohexamer. Forms an RuvA(8)-RuvB(12)-Holliday junction (HJ) complex. HJ DNA is sandwiched between 2 RuvA tetramers; dsDNA enters through RuvA and exits via RuvB. An RuvB hexamer assembles on each DNA strand where it exits the tetramer. Each RuvB hexamer is contacted by two RuvA subunits (via domain III) on 2 adjacent RuvB subunits; this complex drives branch migration. In the full resolvosome a probable DNA-RuvA(4)-RuvB(12)-RuvC(2) complex forms which resolves the HJ.

It localises to the cytoplasm. The enzyme catalyses ATP + H2O = ADP + phosphate + H(+). The RuvA-RuvB-RuvC complex processes Holliday junction (HJ) DNA during genetic recombination and DNA repair, while the RuvA-RuvB complex plays an important role in the rescue of blocked DNA replication forks via replication fork reversal (RFR). RuvA specifically binds to HJ cruciform DNA, conferring on it an open structure. The RuvB hexamer acts as an ATP-dependent pump, pulling dsDNA into and through the RuvAB complex. RuvB forms 2 homohexamers on either side of HJ DNA bound by 1 or 2 RuvA tetramers; 4 subunits per hexamer contact DNA at a time. Coordinated motions by a converter formed by DNA-disengaged RuvB subunits stimulates ATP hydrolysis and nucleotide exchange. Immobilization of the converter enables RuvB to convert the ATP-contained energy into a lever motion, pulling 2 nucleotides of DNA out of the RuvA tetramer per ATP hydrolyzed, thus driving DNA branch migration. The RuvB motors rotate together with the DNA substrate, which together with the progressing nucleotide cycle form the mechanistic basis for DNA recombination by continuous HJ branch migration. Branch migration allows RuvC to scan DNA until it finds its consensus sequence, where it cleaves and resolves cruciform DNA. In Ralstonia pickettii (strain 12J), this protein is Holliday junction branch migration complex subunit RuvB.